The chain runs to 185 residues: Large ribosomal subunit protein uL5 (185 aa).

It belongs to the universal ribosomal protein uL5 family. Part of the 50S ribosomal subunit; part of the 5S rRNA/L5/L18/L25 subcomplex. Contacts the 5S rRNA and the P site tRNA. Forms a bridge to the 30S subunit in the 70S ribosome.

In terms of biological role, this is one of the proteins that bind and probably mediate the attachment of the 5S RNA into the large ribosomal subunit, where it forms part of the central protuberance. In the 70S ribosome it contacts protein S13 of the 30S subunit (bridge B1b), connecting the 2 subunits; this bridge is implicated in subunit movement. Contacts the P site tRNA; the 5S rRNA and some of its associated proteins might help stabilize positioning of ribosome-bound tRNAs. The chain is Large ribosomal subunit protein uL5 from Phocaeicola vulgatus (strain ATCC 8482 / DSM 1447 / JCM 5826 / CCUG 4940 / NBRC 14291 / NCTC 11154) (Bacteroides vulgatus).